The primary structure comprises 368 residues: Peptide chain release factor 2 (368 aa).

At Gln250 the chain carries N5-methylglutamine.

This sequence belongs to the prokaryotic/mitochondrial release factor family. Methylated by PrmC. Methylation increases the termination efficiency of RF2.

It localises to the cytoplasm. Functionally, peptide chain release factor 2 directs the termination of translation in response to the peptide chain termination codons UGA and UAA. The chain is Peptide chain release factor 2 from Mycolicibacterium smegmatis (strain ATCC 700084 / mc(2)155) (Mycobacterium smegmatis).